The chain runs to 302 residues: (2S)-3-sulfopropanediol sulfolyase activating enzyme (302 aa).

Residues histidine 19–glutamate 301 enclose the Radical SAM core domain. Cysteine 33, cysteine 37, cysteine 40, cysteine 59, cysteine 65, cysteine 68, cysteine 72, cysteine 91, cysteine 94, cysteine 97, and cysteine 101 together coordinate [4Fe-4S] cluster. Tryptophan 39 to serine 41 contacts S-adenosyl-L-methionine. 2 consecutive 4Fe-4S ferredoxin-type domains span residues proline 50–glycine 81 and glycine 82–glutamate 111. S-adenosyl-L-methionine contacts are provided by residues glycine 141 and aspartate 190 to lysine 192.

Belongs to the organic radical-activating enzymes family. [4Fe-4S] cluster is required as a cofactor.

It catalyses the reaction glycyl-[protein] + reduced [flavodoxin] + S-adenosyl-L-methionine = glycin-2-yl radical-[protein] + semiquinone [flavodoxin] + 5'-deoxyadenosine + L-methionine + H(+). It functions in the pathway organosulfur degradation; alkanesulfonate degradation. In terms of biological role, involved in the degradation of the organosulfur compound 2(S)-dihydroxypropanesulfonate (DHPS). Catalyzes activation of the (2S)-3-sulfopropanediol sulfolyase HpsG under anaerobic conditions by generation of an organic free radical on a glycine residue. This Bilophila wadsworthia (strain 3_1_6) protein is (2S)-3-sulfopropanediol sulfolyase activating enzyme.